Consider the following 293-residue polypeptide: Pyridoxal 5'-phosphate synthase subunit PdxS (293 aa).

Position 23 (Asp-23) interacts with D-ribose 5-phosphate. Lys-80 acts as the Schiff-base intermediate with D-ribose 5-phosphate in catalysis. Gly-152 lines the D-ribose 5-phosphate pocket. Residue Arg-164 participates in D-glyceraldehyde 3-phosphate binding. Residues Gly-213 and 234–235 (GS) each bind D-ribose 5-phosphate.

The protein belongs to the PdxS/SNZ family. In the presence of PdxT, forms a dodecamer of heterodimers.

It catalyses the reaction aldehydo-D-ribose 5-phosphate + D-glyceraldehyde 3-phosphate + L-glutamine = pyridoxal 5'-phosphate + L-glutamate + phosphate + 3 H2O + H(+). It functions in the pathway cofactor biosynthesis; pyridoxal 5'-phosphate biosynthesis. Catalyzes the formation of pyridoxal 5'-phosphate from ribose 5-phosphate (RBP), glyceraldehyde 3-phosphate (G3P) and ammonia. The ammonia is provided by the PdxT subunit. Can also use ribulose 5-phosphate and dihydroxyacetone phosphate as substrates, resulting from enzyme-catalyzed isomerization of RBP and G3P, respectively. In Niallia circulans (Bacillus circulans), this protein is Pyridoxal 5'-phosphate synthase subunit PdxS.